The chain runs to 448 residues: Glutamyl-tRNA reductase (448 aa).

Residues 48–51, Ser100, 105–107, and Gln111 contribute to the substrate site; these read TCNR and EDQ. The active-site Nucleophile is Cys49. Residue 180–185 coordinates NADP(+); sequence GAGEIG.

Belongs to the glutamyl-tRNA reductase family. As to quaternary structure, homodimer.

The catalysed reaction is (S)-4-amino-5-oxopentanoate + tRNA(Glu) + NADP(+) = L-glutamyl-tRNA(Glu) + NADPH + H(+). The protein operates within porphyrin-containing compound metabolism; protoporphyrin-IX biosynthesis; 5-aminolevulinate from L-glutamyl-tRNA(Glu): step 1/2. Catalyzes the NADPH-dependent reduction of glutamyl-tRNA(Glu) to glutamate 1-semialdehyde (GSA). The polypeptide is Glutamyl-tRNA reductase (Methanosarcina mazei (strain ATCC BAA-159 / DSM 3647 / Goe1 / Go1 / JCM 11833 / OCM 88) (Methanosarcina frisia)).